A 321-amino-acid polypeptide reads, in one-letter code: Glutathione synthetase (321 aa).

Residues 125–311 (EKLFTGWFPH…IAGQFIAFLE (187 aa)) form the ATP-grasp domain. 151–208 (FIREQKEVVIKPLGAMAGESIFYLTVNDPNIPVVIETMTANGHQLVMAQRFIPEVKSG) contributes to the ATP binding site. Positions 282 and 284 each coordinate Mg(2+).

The protein belongs to the prokaryotic GSH synthase family. The cofactor is Mg(2+). It depends on Mn(2+) as a cofactor.

It catalyses the reaction gamma-L-glutamyl-L-cysteine + glycine + ATP = glutathione + ADP + phosphate + H(+). The protein operates within sulfur metabolism; glutathione biosynthesis; glutathione from L-cysteine and L-glutamate: step 2/2. The chain is Glutathione synthetase from Coxiella burnetii (strain RSA 493 / Nine Mile phase I).